Consider the following 1027-residue polypeptide: LLGL scribble cell polarity complex component 2 (1027 aa).

10 WD repeats span residues 36 to 69 (SALGYSPSLRILAIGTRSGAVKLYGAPGVEFMGL), 76 to 117 (VLQI…EESF), 132 to 169 (VTEILPHSSGELLYLGTESGNVFVVQLPGFRTLHDRTI), 193 to 227 (ALQEHPRDPNQILIGYSRGLVVIWDLQGSRALSHF), 233 to 268 (LENASWQRDGCLIVTCHSDGSHCQWPVSSDTQNPEP), 282 to 324 (AITK…GQQT), 332 to 366 (VIDFTVLSEADPAAAFDDPYALVVLAEEELVVIDL), 388 to 464 (TCSH…YKLS), 508 to 583 (QKIF…FVLV), and 592 to 653 (TSLA…LRQS). S653 is subject to Phosphoserine. Residues 654–669 (FRRMRRSRVSSHKRRP) are compositionally biased toward basic residues. Positions 654–678 (FRRMRRSRVSSHKRRPGGPTGEAQA) are disordered. WD repeat units lie at residues 715–771 (VRTL…KEIQ), 780–832 (GILV…VSAK), 837–890 (LTAL…VRYS), and 904–927 (VFTKYGQGFYLISPSEFERFSLST). The interval 940 to 981 (TKAKKHNRPSNGNGTGLKMTSSGHVRNSKSQSDGDEKKPGPV) is disordered. Positions 957-970 (KMTSSGHVRNSKSQ) are enriched in polar residues. 2 positions are modified to phosphoserine: S971 and S1022.

The protein belongs to the WD repeat L(2)GL family. As to quaternary structure, interacts with GPSM2/LGN, PRKCI/aPKC and PARD6B/Par-6. The complex is enhanced during mitosis. Interacts with DCAF1. Phosphorylated at Ser-653 by PRKCI. Phosphorylation is enhanced during cell polarization induced by calcium. Phosphorylation may occur during the cell-cell contact-induced cell polarization and may contribute to the segregation of LLGL2 from the PRKCI/aPKC and PARD6B/Par-6 complex.

The protein resides in the cytoplasm. Its function is as follows. Part of a complex with GPSM2/LGN, PRKCI/aPKC and PARD6B/Par-6, which may ensure the correct organization and orientation of bipolar spindles for normal cell division. This complex plays roles in the initial phase of the establishment of epithelial cell polarity. The polypeptide is LLGL scribble cell polarity complex component 2 (Llgl2) (Mus musculus (Mouse)).